The sequence spans 100 residues: Aspartyl/glutamyl-tRNA(Asn/Gln) amidotransferase subunit C (100 aa).

This sequence belongs to the GatC family. In terms of assembly, heterotrimer of A, B and C subunits.

The catalysed reaction is L-glutamyl-tRNA(Gln) + L-glutamine + ATP + H2O = L-glutaminyl-tRNA(Gln) + L-glutamate + ADP + phosphate + H(+). It carries out the reaction L-aspartyl-tRNA(Asn) + L-glutamine + ATP + H2O = L-asparaginyl-tRNA(Asn) + L-glutamate + ADP + phosphate + 2 H(+). Functionally, allows the formation of correctly charged Asn-tRNA(Asn) or Gln-tRNA(Gln) through the transamidation of misacylated Asp-tRNA(Asn) or Glu-tRNA(Gln) in organisms which lack either or both of asparaginyl-tRNA or glutaminyl-tRNA synthetases. The reaction takes place in the presence of glutamine and ATP through an activated phospho-Asp-tRNA(Asn) or phospho-Glu-tRNA(Gln). The polypeptide is Aspartyl/glutamyl-tRNA(Asn/Gln) amidotransferase subunit C (Novosphingobium aromaticivorans (strain ATCC 700278 / DSM 12444 / CCUG 56034 / CIP 105152 / NBRC 16084 / F199)).